Consider the following 502-residue polypeptide: Ribose import ATP-binding protein RbsA (502 aa).

ABC transporter domains are found at residues 3–239 (VTMR…VGRE) and 249–493 (AAPG…TGGA). Residue 35-42 (GENGAGKS) coordinates ATP.

This sequence belongs to the ABC transporter superfamily. Ribose importer (TC 3.A.1.2.1) family. The complex is composed of an ATP-binding protein (RbsA), two transmembrane proteins (RbsC) and a solute-binding protein (RbsB).

The protein resides in the cell inner membrane. It catalyses the reaction D-ribose(out) + ATP + H2O = D-ribose(in) + ADP + phosphate + H(+). Its function is as follows. Part of the ABC transporter complex RbsABC involved in ribose import. Responsible for energy coupling to the transport system. This chain is Ribose import ATP-binding protein RbsA, found in Chromobacterium violaceum (strain ATCC 12472 / DSM 30191 / JCM 1249 / CCUG 213 / NBRC 12614 / NCIMB 9131 / NCTC 9757 / MK).